The following is an 828-amino-acid chain: Protein TAPT1 homolog (828 aa).

Low complexity-rich tracts occupy residues N67–I83, Q212–P233, and S302–N321. Disordered stretches follow at residues N67–G92, Q212–Y236, and Q297–I346. 5 helical membrane passes run I428–I448, Q472–I492, I562–V582, S722–V742, and I754–I774. The span at L797–T822 shows a compositional bias: low complexity. The disordered stretch occupies residues L797–N828.

The protein belongs to the TAPT1 family.

The protein resides in the membrane. This is Protein TAPT1 homolog from Dictyostelium discoideum (Social amoeba).